The following is a 963-amino-acid chain: Kinesin-1 heavy chain (963 aa).

At A2 the chain carries N-acetylalanine. Residues 8-325 (NIKVMCRFRP…LLFGQRAKTI (318 aa)) form the Kinesin motor domain. 85–92 (GQTSSGKT) contacts ATP. Residue K213 forms a Glycyl lysine isopeptide (Lys-Gly) (interchain with G-Cter in SUMO2) linkage. The stretch at 329–914 (VCVNVELTAE…AVRSKNMARR (586 aa)) forms a coiled coil. The disordered stretch occupies residues 908-963 (SKNMARRGHSAQIAKPIRPGQHPAASPTHPSAIRGGGAFVQNSQPVAVRGGGGKQV). Residues 915 to 963 (GHSAQIAKPIRPGQHPAASPTHPSAIRGGGAFVQNSQPVAVRGGGGKQV) are globular. S933 carries the post-translational modification Phosphoserine. R956 is modified (omega-N-methylarginine).

This sequence belongs to the TRAFAC class myosin-kinesin ATPase superfamily. Kinesin family. Kinesin subfamily. Oligomer composed of two heavy chains and two light chains. Interacts with GRIP1 and PPP1R42. Interacts with SYBU. Interacts with JAKMIP1. Interacts with PLEKHM2. Interacts with ECPAS. Interacts with ZFYVE27. Found in a complex with OGT, RHOT1, RHOT2 and TRAK1. Interacts with APP (via cytoplasmic domain).

Its subcellular location is the cytoplasm. It is found in the cytoskeleton. The protein resides in the cytolytic granule membrane. It localises to the lysosome membrane. In terms of biological role, microtubule-dependent motor required for normal distribution of mitochondria and lysosomes. Can induce formation of neurite-like membrane protrusions in non-neuronal cells in a ZFYVE27-dependent manner. Regulates centrosome and nuclear positioning during mitotic entry. During the G2 phase of the cell cycle in a BICD2-dependent manner, antagonizes dynein function and drives the separation of nuclei and centrosomes. Required for anterograde axonal transportation of MAPK8IP3/JIP3 which is essential for MAPK8IP3/JIP3 function in axon elongation. Through binding with PLEKHM2 and ARL8B, directs lysosome movement toward microtubule plus ends. Involved in NK cell-mediated cytotoxicity. Drives the polarization of cytolytic granules and microtubule-organizing centers (MTOCs) toward the immune synapse between effector NK lymphocytes and target cells. This Homo sapiens (Human) protein is Kinesin-1 heavy chain.